We begin with the raw amino-acid sequence, 341 residues long: Dual oxidase maturation factor 1 (341 aa).

The Extracellular portion of the chain corresponds to 1-24 (MAALGHTLPFYTGTKPTFPMDTTL). The helical transmembrane segment at 25-45 (AVIITIFLTALVTFIIILPGI) threads the bilayer. Residues 46–51 (RGKTRL) are Cytoplasmic-facing. A helical transmembrane segment spans residues 52–72 (FWLLRVVTSLFIGAVILAVNF). At 73–183 (SSEWSVGHVN…RLAGHYASAM (111 aa)) the chain is on the extracellular side. N84, N109, and N121 each carry an N-linked (GlcNAc...) asparagine glycan. Residues 184 to 204 (LWVAFLCWLLANVMLSMPVLV) traverse the membrane as a helical segment. Residue Y205 is a topological domain, cytoplasmic. The helical transmembrane segment at 206–226 (GGHMLLATGLFQLLALFFFSM) threads the bilayer. Topologically, residues 227 to 249 (TTSLISPCPLRLGTAVLHTHHGP) are extracellular. The chain crosses the membrane as a helical span at residues 250-270 (AFWITLATGLLCILLGLVMAV). Topologically, residues 271–341 (AHRMQPHRLK…EHPKESDCSL (71 aa)) are cytoplasmic.

The protein belongs to the DUOXA family. In terms of assembly, may interact with NUMB.

It localises to the membrane. Functionally, may be required for the maturation and the transport from the endoplasmic reticulum to the plasma membrane of functional DUOX1. The chain is Dual oxidase maturation factor 1 (Duoxa1) from Mus musculus (Mouse).